The chain runs to 328 residues: Tetraacyldisaccharide 4'-kinase (328 aa).

Residue Thr59–Thr66 participates in ATP binding.

Belongs to the LpxK family.

The enzyme catalyses a lipid A disaccharide + ATP = a lipid IVA + ADP + H(+). It functions in the pathway glycolipid biosynthesis; lipid IV(A) biosynthesis; lipid IV(A) from (3R)-3-hydroxytetradecanoyl-[acyl-carrier-protein] and UDP-N-acetyl-alpha-D-glucosamine: step 6/6. In terms of biological role, transfers the gamma-phosphate of ATP to the 4'-position of a tetraacyldisaccharide 1-phosphate intermediate (termed DS-1-P) to form tetraacyldisaccharide 1,4'-bis-phosphate (lipid IVA). In Aliivibrio fischeri (strain MJ11) (Vibrio fischeri), this protein is Tetraacyldisaccharide 4'-kinase.